We begin with the raw amino-acid sequence, 312 residues long: Ribosomal RNA small subunit methyltransferase H (312 aa).

S-adenosyl-L-methionine-binding positions include 34 to 36, Asp54, Phe78, Asp100, and Gln107; that span reads GGH.

It belongs to the methyltransferase superfamily. RsmH family.

The protein localises to the cytoplasm. It catalyses the reaction cytidine(1402) in 16S rRNA + S-adenosyl-L-methionine = N(4)-methylcytidine(1402) in 16S rRNA + S-adenosyl-L-homocysteine + H(+). Its function is as follows. Specifically methylates the N4 position of cytidine in position 1402 (C1402) of 16S rRNA. The sequence is that of Ribosomal RNA small subunit methyltransferase H from Salmonella choleraesuis (strain SC-B67).